Consider the following 327-residue polypeptide: Phenylalanine--tRNA ligase alpha subunit (327 aa).

Glu-252 lines the Mg(2+) pocket.

Belongs to the class-II aminoacyl-tRNA synthetase family. Phe-tRNA synthetase alpha subunit type 1 subfamily. Tetramer of two alpha and two beta subunits. Mg(2+) serves as cofactor.

Its subcellular location is the cytoplasm. The enzyme catalyses tRNA(Phe) + L-phenylalanine + ATP = L-phenylalanyl-tRNA(Phe) + AMP + diphosphate + H(+). This Serratia proteamaculans (strain 568) protein is Phenylalanine--tRNA ligase alpha subunit.